We begin with the raw amino-acid sequence, 167 residues long: Adenylylsulfate reductase subunit beta (167 aa).

4Fe-4S ferredoxin-type domains are found at residues 1-35 (MPTF…LDPE) and 38-67 (KAFN…ARPY). [4Fe-4S] cluster contacts are provided by Cys-10, Cys-13, Cys-21, Cys-25, Cys-47, Cys-50, Cys-53, and Cys-57.

Heterodimer composed of AprA and AprB. The heterodimers can dimerize to form heterotetramers. Requires [4Fe-4S] cluster as cofactor.

The protein localises to the cytoplasm. Iron-sulfur cluster subunit of the adenylylsulfate reductase which catalyzes reversibly the reduction of adenosine 5'-phosphosulfate (APS) to sulfite and AMP during dissimilatory sulfate reduction. The iron-sulfur cluster 2 is thought to accept electrons from a still unknown electron donor and transfer electrons to the iron-sulfur cluster 1 of this protein and then onto the FAD of AprA. This chain is Adenylylsulfate reductase subunit beta, found in Megalodesulfovibrio gigas (strain ATCC 19364 / DSM 1382 / NCIMB 9332 / VKM B-1759) (Desulfovibrio gigas).